A 295-amino-acid chain; its full sequence is Pyridoxal 5'-phosphate synthase subunit PdxS (295 aa).

Residue aspartate 25 participates in D-ribose 5-phosphate binding. Residue lysine 82 is the Schiff-base intermediate with D-ribose 5-phosphate of the active site. Glycine 154 contacts D-ribose 5-phosphate. Residue arginine 166 participates in D-glyceraldehyde 3-phosphate binding. Residues glycine 215 and 236–237 (GS) contribute to the D-ribose 5-phosphate site.

Belongs to the PdxS/SNZ family. In terms of assembly, in the presence of PdxT, forms a dodecamer of heterodimers.

The enzyme catalyses aldehydo-D-ribose 5-phosphate + D-glyceraldehyde 3-phosphate + L-glutamine = pyridoxal 5'-phosphate + L-glutamate + phosphate + 3 H2O + H(+). The protein operates within cofactor biosynthesis; pyridoxal 5'-phosphate biosynthesis. In terms of biological role, catalyzes the formation of pyridoxal 5'-phosphate from ribose 5-phosphate (RBP), glyceraldehyde 3-phosphate (G3P) and ammonia. The ammonia is provided by the PdxT subunit. Can also use ribulose 5-phosphate and dihydroxyacetone phosphate as substrates, resulting from enzyme-catalyzed isomerization of RBP and G3P, respectively. This chain is Pyridoxal 5'-phosphate synthase subunit PdxS, found in Bacillus cereus (strain G9842).